Consider the following 361-residue polypeptide: GDSL esterase/lipase At4g18970 (361 aa).

A signal peptide spans 1–22 (MARVCVMMMAMAIAMAMNIAMG). The active-site Nucleophile is the Ser35. Residues Asp325 and His328 contribute to the active site.

This sequence belongs to the 'GDSL' lipolytic enzyme family.

Its subcellular location is the secreted. The chain is GDSL esterase/lipase At4g18970 from Arabidopsis thaliana (Mouse-ear cress).